Consider the following 80-residue polypeptide: uncharacterized protein (80 aa).

Belongs to the BolA/IbaG family.

This is an uncharacterized protein from Buchnera aphidicola subsp. Schizaphis graminum (strain Sg).